Here is a 406-residue protein sequence, read N- to C-terminus: NADH-quinone oxidoreductase subunit D (406 aa).

The protein belongs to the complex I 49 kDa subunit family. In terms of assembly, NDH-1 is composed of 14 different subunits. Subunits NuoB, C, D, E, F, and G constitute the peripheral sector of the complex.

It localises to the cell inner membrane. The catalysed reaction is a quinone + NADH + 5 H(+)(in) = a quinol + NAD(+) + 4 H(+)(out). Functionally, NDH-1 shuttles electrons from NADH, via FMN and iron-sulfur (Fe-S) centers, to quinones in the respiratory chain. The immediate electron acceptor for the enzyme in this species is believed to be ubiquinone. Couples the redox reaction to proton translocation (for every two electrons transferred, four hydrogen ions are translocated across the cytoplasmic membrane), and thus conserves the redox energy in a proton gradient. This is NADH-quinone oxidoreductase subunit D from Rhizorhabdus wittichii (strain DSM 6014 / CCUG 31198 / JCM 15750 / NBRC 105917 / EY 4224 / RW1) (Sphingomonas wittichii).